Consider the following 291-residue polypeptide: Homoserine kinase (291 aa).

80–90 (RPASGLGSSAA) is an ATP binding site.

This sequence belongs to the GHMP kinase family. Homoserine kinase subfamily.

It is found in the cytoplasm. It carries out the reaction L-homoserine + ATP = O-phospho-L-homoserine + ADP + H(+). It participates in amino-acid biosynthesis; L-threonine biosynthesis; L-threonine from L-aspartate: step 4/5. Its function is as follows. Catalyzes the ATP-dependent phosphorylation of L-homoserine to L-homoserine phosphate. This chain is Homoserine kinase, found in Haloarcula marismortui (strain ATCC 43049 / DSM 3752 / JCM 8966 / VKM B-1809) (Halobacterium marismortui).